The sequence spans 206 residues: Protein GET1 (206 aa).

Over 1 to 4 (MPSL) the chain is Lumenal. The helical transmembrane segment at 5-24 (LITVLFLNVIIYVINTVGAA) threads the bilayer. Residues 25 to 110 (TVDGLLWLLY…TFDMTIKIAR (86 aa)) lie on the Cytoplasmic side of the membrane. Residues 75–100 (AKLRRRHDKAMEAYEAKNNELTQSKS) are a coiled coil. A helical transmembrane segment spans residues 111-131 (WAATSGLMLFLQFWYSKTPIF). Residues 132 to 155 (TLPPGWIPWQVQWVLSFPRAPMGT) are Lumenal-facing. The chain crosses the membrane as a helical span at residues 156–172 (VSIQIWGGACATVVALV). The Cytoplasmic portion of the chain corresponds to 173–206 (GDAMRASLAYVSKPKIDRIKLGATMEGKEGKKRQ).

It belongs to the WRB/GET1 family. Interacts with GET3.

The protein resides in the endoplasmic reticulum membrane. Required for the post-translational delivery of tail-anchored (TA) proteins to the endoplasmic reticulum. Acts as a membrane receptor for soluble GET3, which recognizes and selectively binds the transmembrane domain of TA proteins in the cytosol. This chain is Protein GET1, found in Ajellomyces capsulatus (strain NAm1 / WU24) (Darling's disease fungus).